We begin with the raw amino-acid sequence, 421 residues long: Phosphoglycerate kinase (421 aa).

(2R)-3-phosphoglycerate contacts are provided by V23, D24, F25, N26, Q41, R42, S65, H66, G68, R69, L124, R125, H172, and R173. An ADP-binding site is contributed by G216. G216 serves as a coordination point for CDP. K218 serves as a coordination point for AMP. D221 lines the CDP pocket. D221 contacts Mg(2+). K222 contributes to the AMP binding site. K222 lines the ATP pocket. Position 240 (G240) interacts with ADP. CDP is bound at residue G240. Residues G241 and G315 each contribute to the AMP site. G241 and G315 together coordinate ATP. Positions 340 and 345 each coordinate CDP. F345 contacts ADP. E346 serves as a coordination point for AMP. E346, D377, and T378 together coordinate ATP. A Mg(2+)-binding site is contributed by D377.

It belongs to the phosphoglycerate kinase family. In terms of assembly, monomer. Mg(2+) is required as a cofactor.

The protein resides in the cytoplasm. It is found in the mitochondrion. It catalyses the reaction (2R)-3-phosphoglycerate + ATP = (2R)-3-phospho-glyceroyl phosphate + ADP. It functions in the pathway carbohydrate degradation; glycolysis; pyruvate from D-glyceraldehyde 3-phosphate: step 2/5. In terms of biological role, catalyzes one of the two ATP producing reactions in the glycolytic pathway via the reversible conversion of 1,3-diphosphoglycerate to 3-phosphoglycerate. Both L- and D- forms of purine and pyrimidine nucleotides can be used as substrates, but the activity is much lower on pyrimidines. Negatively regulates the biosynthesis of acetyl-CoA from pyruvate in the mitochondrion. The sequence is that of Phosphoglycerate kinase (pgkA) from Emericella nidulans (strain FGSC A4 / ATCC 38163 / CBS 112.46 / NRRL 194 / M139) (Aspergillus nidulans).